The sequence spans 162 residues: Peroxiredoxin-2D (162 aa).

Residues 4-162 (ITVGDVVPDG…SSAEDILKAL (159 aa)) enclose the Thioredoxin domain. Cys51 functions as the Cysteine sulfenic acid (-SOH) intermediate in the catalytic mechanism.

It belongs to the peroxiredoxin family. Prx5 subfamily. Monomer. As to expression, exclusively expressed in buds and flowers. Also detected in pollen.

It is found in the cytoplasm. It catalyses the reaction [glutaredoxin]-dithiol + a hydroperoxide = [glutaredoxin]-disulfide + an alcohol + H2O. Functionally, thiol-specific peroxidase that catalyzes the reduction of hydrogen peroxide and organic hydroperoxides to water and alcohols, respectively. Plays a role in cell protection against oxidative stress by detoxifying peroxides. May be involved in intracellular redox signaling. This Arabidopsis thaliana (Mouse-ear cress) protein is Peroxiredoxin-2D (PRXIID).